The primary structure comprises 209 residues: Uracil phosphoribosyltransferase (209 aa).

5-phospho-alpha-D-ribose 1-diphosphate is bound by residues R79, R104, and 131-139; that span reads DPMLATGGS. Uracil contacts are provided by residues I194 and 199–201; that span reads GDA. D200 lines the 5-phospho-alpha-D-ribose 1-diphosphate pocket.

It belongs to the UPRTase family. It depends on Mg(2+) as a cofactor.

It catalyses the reaction UMP + diphosphate = 5-phospho-alpha-D-ribose 1-diphosphate + uracil. It participates in pyrimidine metabolism; UMP biosynthesis via salvage pathway; UMP from uracil: step 1/1. Allosterically activated by GTP. In terms of biological role, catalyzes the conversion of uracil and 5-phospho-alpha-D-ribose 1-diphosphate (PRPP) to UMP and diphosphate. This chain is Uracil phosphoribosyltransferase, found in Latilactobacillus sakei (Lactobacillus sakei).